Reading from the N-terminus, the 486-residue chain is ATP synthase subunit beta (486 aa).

ATP is bound at residue 167 to 174; the sequence is GGAGVGKT.

The protein belongs to the ATPase alpha/beta chains family. In terms of assembly, F-type ATPases have 2 components, CF(1) - the catalytic core - and CF(0) - the membrane proton channel. CF(1) has five subunits: alpha(3), beta(3), gamma(1), delta(1), epsilon(1). CF(0) has three main subunits: a(1), b(2) and c(9-12). The alpha and beta chains form an alternating ring which encloses part of the gamma chain. CF(1) is attached to CF(0) by a central stalk formed by the gamma and epsilon chains, while a peripheral stalk is formed by the delta and b chains.

The protein localises to the cell inner membrane. The enzyme catalyses ATP + H2O + 4 H(+)(in) = ADP + phosphate + 5 H(+)(out). In terms of biological role, produces ATP from ADP in the presence of a proton gradient across the membrane. The catalytic sites are hosted primarily by the beta subunits. The chain is ATP synthase subunit beta from Anaplasma marginale (strain St. Maries).